The primary structure comprises 125 residues: Salivary protein 15 Ipac-1 (125 aa).

A signal peptide spans 1 to 15 (MKVVCIILLFGIAAA). N-linked (GlcNAc...) asparagine glycans are attached at residues N82 and N94. A CD4-binding region spans residues 106–125 (GPSGQTCADKSKCVGHIPGC).

It belongs to the salp15 family. In terms of assembly, interacts with host CD4. Interacts with host DC-SIGN (CD209). Interacts with Borrelia outer surface protein C (OspC). As to expression, expressed in salivary glands.

The protein resides in the secreted. In terms of biological role, salivary tick protein that downregulates host immune system by binding to both dendritic cells, and CD4(+) T cells. Specifically binds to the CD4 coreceptor on T cells. This interaction prevents the activation of the Src kinase, Lck, and its downstream substrate Zap-70, and results in deficient activation of PLCgamma1, the repression of calcium fluxes triggered by T-cell antigen receptor (TCR) ligation, and a subsequent reduction in interleukin-2 production. This salivary protein also binds to DC-SIGN (CD209) on dendritic cells (DC) and activates the Raf-1 kinase/MEK signaling pathway that results in down-regulating expression of pro-inflammatory cytokines. Furthermore, it inhibits T cell proliferation induced by DCs. It also inhibits in vitro keratinocyte inflammation induced by Borrelia burgdorferi or by the major outer surface protein (OspC) of Borrelia. In addition, it downregulates chemokines and monocyte chemoattractant protein 1, as well as several antimicrobial peptides such as defensins, cathelicidin, psoriasin, and RNase 7. Apart from its immunomodulatory activities, it is also associated with protection of Borrelia spirochetes from antibody-mediated killing through its binding to OspC. In vivo, tests on different immune disease animal models show promising therapeutic results, e.g., in inhibiting HIV infection, experimental autoimmune encephalomyelitis, transplantation rejection, and asthma. The protein is Salivary protein 15 Ipac-1 of Ixodes pacificus (Western black-legged tick).